Consider the following 365-residue polypeptide: Aminomethyltransferase (365 aa).

The protein belongs to the GcvT family. The glycine cleavage system is composed of four proteins: P, T, L and H.

The catalysed reaction is N(6)-[(R)-S(8)-aminomethyldihydrolipoyl]-L-lysyl-[protein] + (6S)-5,6,7,8-tetrahydrofolate = N(6)-[(R)-dihydrolipoyl]-L-lysyl-[protein] + (6R)-5,10-methylene-5,6,7,8-tetrahydrofolate + NH4(+). Functionally, the glycine cleavage system catalyzes the degradation of glycine. The protein is Aminomethyltransferase of Bacillus pumilus (strain SAFR-032).